Here is a 272-residue protein sequence, read N- to C-terminus: Type II secretion system protein C (272 aa).

The Cytoplasmic portion of the chain corresponds to 1-16 (MNISKLPPLSPSVIRR). The chain crosses the membrane as a helical span at residues 17-35 (ILFYLLMLLFCQQLAMIFW). The Periplasmic portion of the chain corresponds to 36–272 (RIGLPDNAPV…DIYMEFGGDE (237 aa)).

Belongs to the GSP C family.

The protein resides in the cell inner membrane. Functionally, involved in a type II secretion system (T2SS, formerly general secretion pathway, GSP) for the export of proteins. Required for the translocation of the multiple pectic enzymes. This is Type II secretion system protein C (outC) from Dickeya dadantii (strain 3937) (Erwinia chrysanthemi (strain 3937)).